The sequence spans 243 residues: uncharacterized protein (243 aa).

2 stretches are compositionally biased toward basic and acidic residues: residues 1-11 and 167-178; these read MSDEGYRELVE and RNRDPPRPSYLR. Disordered stretches follow at residues 1 to 26 and 146 to 243; these read MSDEGYRELVESKSAPTTPGPWSPDR and ELYQ…CWPF. The span at 185 to 200 shows a compositional bias: low complexity; the sequence is STTTARRPRAMTSTPE.

This is an uncharacterized protein from Canis lupus familiaris (Dog).